The primary structure comprises 321 residues: Anthranilate phosphoribosyltransferase (321 aa).

5-phospho-alpha-D-ribose 1-diphosphate is bound by residues Gly-72, 75–76 (GD), Thr-80, 82–85 (NVST), 99–107 (KHGNVSITS), and Ser-111. An anthranilate-binding site is contributed by Gly-72. Position 84 (Ser-84) interacts with Mg(2+). Asn-102 is a binding site for anthranilate. Position 157 (Arg-157) interacts with anthranilate. Positions 216 and 217 each coordinate Mg(2+).

The protein belongs to the anthranilate phosphoribosyltransferase family. In terms of assembly, homodimer. Mg(2+) serves as cofactor.

It carries out the reaction N-(5-phospho-beta-D-ribosyl)anthranilate + diphosphate = 5-phospho-alpha-D-ribose 1-diphosphate + anthranilate. It functions in the pathway amino-acid biosynthesis; L-tryptophan biosynthesis; L-tryptophan from chorismate: step 2/5. In terms of biological role, catalyzes the transfer of the phosphoribosyl group of 5-phosphorylribose-1-pyrophosphate (PRPP) to anthranilate to yield N-(5'-phosphoribosyl)-anthranilate (PRA). The polypeptide is Anthranilate phosphoribosyltransferase (Methanococcus maripaludis (strain DSM 14266 / JCM 13030 / NBRC 101832 / S2 / LL)).